The primary structure comprises 204 residues: FMN-dependent NADH:quinone oxidoreductase (204 aa).

Residues S9 and 15–17 (SAS) contribute to the FMN site.

It belongs to the azoreductase type 1 family. Homodimer. Requires FMN as cofactor.

It carries out the reaction 2 a quinone + NADH + H(+) = 2 a 1,4-benzosemiquinone + NAD(+). The catalysed reaction is N,N-dimethyl-1,4-phenylenediamine + anthranilate + 2 NAD(+) = 2-(4-dimethylaminophenyl)diazenylbenzoate + 2 NADH + 2 H(+). In terms of biological role, quinone reductase that provides resistance to thiol-specific stress caused by electrophilic quinones. Functionally, also exhibits azoreductase activity. Catalyzes the reductive cleavage of the azo bond in aromatic azo compounds to the corresponding amines. The polypeptide is FMN-dependent NADH:quinone oxidoreductase (Xanthomonas campestris pv. campestris (strain ATCC 33913 / DSM 3586 / NCPPB 528 / LMG 568 / P 25)).